We begin with the raw amino-acid sequence, 210 residues long: Thymidylate kinase (210 aa).

Position 9-16 (9-16 (GLEGAGKS)) interacts with ATP.

It belongs to the thymidylate kinase family.

It catalyses the reaction dTMP + ATP = dTDP + ADP. Functionally, phosphorylation of dTMP to form dTDP in both de novo and salvage pathways of dTTP synthesis. In Aliivibrio fischeri (strain MJ11) (Vibrio fischeri), this protein is Thymidylate kinase.